A 36-amino-acid polypeptide reads, in one-letter code: Photosystem I reaction center subunit VIII (36 aa).

The helical transmembrane segment at 1 to 21 threads the bilayer; that stretch reads MITFSFPSIFVPLVGLVFPAI.

Belongs to the PsaI family.

Its subcellular location is the plastid. It is found in the chloroplast thylakoid membrane. May help in the organization of the PsaL subunit. This Coffea arabica (Arabian coffee) protein is Photosystem I reaction center subunit VIII.